The following is a 447-amino-acid chain: Gamma-glutamyl phosphate reductase (447 aa).

This sequence belongs to the gamma-glutamyl phosphate reductase family.

It is found in the cytoplasm. The enzyme catalyses L-glutamate 5-semialdehyde + phosphate + NADP(+) = L-glutamyl 5-phosphate + NADPH + H(+). The protein operates within amino-acid biosynthesis; L-proline biosynthesis; L-glutamate 5-semialdehyde from L-glutamate: step 2/2. Its function is as follows. Catalyzes the NADPH-dependent reduction of L-glutamate 5-phosphate into L-glutamate 5-semialdehyde and phosphate. The product spontaneously undergoes cyclization to form 1-pyrroline-5-carboxylate. The chain is Gamma-glutamyl phosphate reductase from Methanosarcina barkeri (strain Fusaro / DSM 804).